A 172-amino-acid chain; its full sequence is RTX-I toxin-activating lysine-acyltransferase ApxIC (172 aa).

Catalysis depends on residues His24 and Asp93.

Belongs to the RTX toxin acyltransferase family. Homodimer.

The protein resides in the cytoplasm. The catalysed reaction is a fatty acyl-[ACP] + L-lysyl-[protein] = N(6)-(fatty acyl)-L-lysyl-[protein] + holo-[ACP] + H(+). Functionally, protein-lysine acyltransferase that catalyzes fatty acylation of the protoxin, thereby converting it to the active toxin. In Actinobacillus pleuropneumoniae (Haemophilus pleuropneumoniae), this protein is RTX-I toxin-activating lysine-acyltransferase ApxIC.